A 176-amino-acid polypeptide reads, in one-letter code: Ribosome maturation factor RimM (176 aa).

The region spanning 94–176 (KDEFFYFEIL…RFGFEILQNS (83 aa)) is the PRC barrel domain.

It belongs to the RimM family. In terms of assembly, binds ribosomal protein uS19.

The protein localises to the cytoplasm. In terms of biological role, an accessory protein needed during the final step in the assembly of 30S ribosomal subunit, possibly for assembly of the head region. Essential for efficient processing of 16S rRNA. May be needed both before and after RbfA during the maturation of 16S rRNA. It has affinity for free ribosomal 30S subunits but not for 70S ribosomes. This Campylobacter hominis (strain ATCC BAA-381 / DSM 21671 / CCUG 45161 / LMG 19568 / NCTC 13146 / CH001A) protein is Ribosome maturation factor RimM.